Consider the following 406-residue polypeptide: 26S proteasome regulatory subunit 8 (406 aa).

Ala-2 is modified (N-acetylalanine). At Ser-120 the chain carries Phosphoserine. The may mediate interaction with PRPF9 stretch occupies residues 186 to 406; that stretch reads VLLYGPPGTG…KNMSIKKLWK (221 aa). 190–197 serves as a coordination point for ATP; the sequence is GPPGTGKT. Lys-222 is subject to N6-acetyllysine.

The protein belongs to the AAA ATPase family. As to quaternary structure, component of the 19S proteasome regulatory particle complex. The 26S proteasome consists of a 20S core particle (CP) and two 19S regulatory subunits (RP). The regulatory particle is made of a lid composed of 9 subunits, a base containing 6 ATPases including PSMC5 and few additional components. Component of a complex with USP49 and RUVBL1. Interacts with PRPF19. Interacts with TRIM5. Interacts with NDC80. Interacts with PAAF1. Interacts, in vitro, with the thyroid hormone receptor (in a thyroid hormone T3-dependent manner) and with retinoid X receptor (RXR). Interacts with ERCC6.

The protein localises to the cytoplasm. The protein resides in the nucleus. Component of the 26S proteasome, a multiprotein complex involved in the ATP-dependent degradation of ubiquitinated proteins. This complex plays a key role in the maintenance of protein homeostasis by removing misfolded or damaged proteins, which could impair cellular functions, and by removing proteins whose functions are no longer required. Therefore, the proteasome participates in numerous cellular processes, including cell cycle progression, apoptosis, or DNA damage repair. PSMC5 belongs to the heterohexameric ring of AAA (ATPases associated with diverse cellular activities) proteins that unfolds ubiquitinated target proteins that are concurrently translocated into a proteolytic chamber and degraded into peptides. The protein is 26S proteasome regulatory subunit 8 (PSMC5) of Bos taurus (Bovine).